The following is a 542-amino-acid chain: MGAYLSQPNTVKCSGDGVGAPRLPLPYGFSAMQGWRVSMEDAHNCIPELDNETAMFSVYDGHGGEEVALYCAKYLPDIIKDQKAYKEGKLQKALQDAFLAIDAKLTTDEVIKELAQIAGRPTEDEDDKEKVADEDDVDNEEAALLHEEATMTIEELLTRYGQNCQKGPPHTKSGTGIGDEPEPQGLNGEAGPEDPSRETPSQENGPTAKGHTGPSSNSDHGTEAGQIGEPGTATGEAGPSCSSASDKLPRVAKSKFFEDSEDESDEVEEEEDDIEECSEDEDGYSSEEAENEEDEDDTEEAEEDDDEEMMVPGMEGKEEPGSDSGTTAVVALIRGKQLIVANAGDSRCVVSEAGKALDMSYDHKPEDEVELARIKNAGGKVTMDGRVNGGLNLSRAIGDHFYKRNKNLPPQEQMISALPDIKVLTLTDDHEFMVIACDGIWNVMSSQEVVDFIQSKISQRDENGELRLLSSIVEELLDQCLAPDTSGDGTGCDNMTCIIICFKPRNTVELQPESGKRKLEEALSTEGAEENGNSDKKKAKRD.

Glycine 2 carries N-myristoyl glycine lipidation. The residue at position 22 (arginine 22) is an Omega-N-methylarginine. In terms of domain architecture, PPM-type phosphatase spans 26-502 (PYGFSAMQGW…DNMTCIIICF (477 aa)). Mn(2+)-binding residues include aspartate 60 and glycine 61. Disordered stretches follow at residues 118-139 (AGRP…DVDN) and 162-325 (QNCQ…SDSG). The residue at position 122 (threonine 122) is a Phosphothreonine. Acidic residues-rich tracts occupy residues 123-139 (EDED…DVDN) and 259-309 (DSED…DEEM). Lysine 380 carries the post-translational modification N6-acetyllysine. Mn(2+) is bound by residues aspartate 438 and aspartate 493. The tract at residues 510–542 (LQPESGKRKLEEALSTEGAEENGNSDKKKAKRD) is disordered. Serine 524 is subject to Phosphoserine.

It belongs to the PP2C family. In terms of assembly, interacts with NOL3; may dephosphorylate NOL3. Mg(2+) is required as a cofactor. The cofactor is Mn(2+).

It localises to the cytoplasm. It is found in the membrane. The catalysed reaction is O-phospho-L-seryl-[protein] + H2O = L-seryl-[protein] + phosphate. It catalyses the reaction O-phospho-L-threonyl-[protein] + H2O = L-threonyl-[protein] + phosphate. The protein is Protein phosphatase 1G of Rattus norvegicus (Rat).